The primary structure comprises 608 residues: Elongation factor 4 (608 aa).

Positions 11–193 (DHIRNFSIVA…AIVNRLPPPK (183 aa)) constitute a tr-type G domain. GTP-binding positions include 23–28 (DHGKST) and 140–143 (NKID).

Belongs to the TRAFAC class translation factor GTPase superfamily. Classic translation factor GTPase family. LepA subfamily.

The protein resides in the cell inner membrane. It carries out the reaction GTP + H2O = GDP + phosphate + H(+). Its function is as follows. Required for accurate and efficient protein synthesis under certain stress conditions. May act as a fidelity factor of the translation reaction, by catalyzing a one-codon backward translocation of tRNAs on improperly translocated ribosomes. Back-translocation proceeds from a post-translocation (POST) complex to a pre-translocation (PRE) complex, thus giving elongation factor G a second chance to translocate the tRNAs correctly. Binds to ribosomes in a GTP-dependent manner. The chain is Elongation factor 4 from Agrobacterium fabrum (strain C58 / ATCC 33970) (Agrobacterium tumefaciens (strain C58)).